A 166-amino-acid chain; its full sequence is Lipoprotein signal peptidase (166 aa).

4 helical membrane passes run 9–29 (ASGALAPWLGISLIVILFDQL), 45–65 (ALTSFFNLVLVYNRGAAFGFL), 71–91 (WQRWAFTALGVGATLVICFLL), and 100–120 (FSVSLALILGGALGNVIDRLV). Residues aspartate 126 and aspartate 144 contribute to the active site. The chain crosses the membrane as a helical span at residues 135–155 (WHFPAFNLADSAITVGAVLLI).

It belongs to the peptidase A8 family.

The protein localises to the cell inner membrane. The enzyme catalyses Release of signal peptides from bacterial membrane prolipoproteins. Hydrolyzes -Xaa-Yaa-Zaa-|-(S,diacylglyceryl)Cys-, in which Xaa is hydrophobic (preferably Leu), and Yaa (Ala or Ser) and Zaa (Gly or Ala) have small, neutral side chains.. The protein operates within protein modification; lipoprotein biosynthesis (signal peptide cleavage). This protein specifically catalyzes the removal of signal peptides from prolipoproteins. The polypeptide is Lipoprotein signal peptidase (Burkholderia cenocepacia (strain HI2424)).